A 199-amino-acid chain; its full sequence is Superoxide dismutase [Fe] (199 aa).

The Fe cation site is built by H27, H74, D158, and H162.

It belongs to the iron/manganese superoxide dismutase family. As to quaternary structure, homodimer. It depends on Fe cation as a cofactor.

It catalyses the reaction 2 superoxide + 2 H(+) = H2O2 + O2. Destroys superoxide anion radicals which are normally produced within the cells and which are toxic to biological systems. The polypeptide is Superoxide dismutase [Fe] (SODB) (Babesia bovis).